A 252-amino-acid polypeptide reads, in one-letter code: Hydroxyacylglutathione hydrolase (252 aa).

7 residues coordinate Zn(2+): H54, H56, D58, H59, H111, D128, and H166.

Belongs to the metallo-beta-lactamase superfamily. Glyoxalase II family. In terms of assembly, monomer. Requires Zn(2+) as cofactor.

It catalyses the reaction an S-(2-hydroxyacyl)glutathione + H2O = a 2-hydroxy carboxylate + glutathione + H(+). It participates in secondary metabolite metabolism; methylglyoxal degradation; (R)-lactate from methylglyoxal: step 2/2. Functionally, thiolesterase that catalyzes the hydrolysis of S-D-lactoyl-glutathione to form glutathione and D-lactic acid. The sequence is that of Hydroxyacylglutathione hydrolase from Aliivibrio salmonicida (strain LFI1238) (Vibrio salmonicida (strain LFI1238)).